The sequence spans 422 residues: Probable zinc-type alcohol dehydrogenase-like protein L498 (422 aa).

The Zn(2+) site is built by C108, H129, C160, C163, C166, C174, and C231.

The cofactor is Zn(2+).

Its subcellular location is the host cytoplasm. It localises to the virion. This Acanthamoeba polyphaga (Amoeba) protein is Probable zinc-type alcohol dehydrogenase-like protein L498.